The chain runs to 392 residues: MDLFGDLPEPERAPRPSAGKEAQGRPVLFEDLPPASSTDSGSGGPLLFDDLPPAASGNSGSLATSGSQVVKTEGKGAKRKAPEEEKNGGEELVEKKVCKASSVIFGLKGYVAERKGEREEMQDAHVILNDITQECNPPSSLITRVSYFAVFDGHGGIRASKFAAQNLHQNLIRKFPKGDIISVEKTVKRCLLDTFKHTDEEFLKQASSQKPAWKDGSTATCVLAVDNILYIANLGDSRAILCRYNEESQKHAALSLSKEHNPTQYEERMRIQKAGGNVRDGRVLGVLEVSRSIGDGQYKRCGVTSVPDIRRCQLTPNDRFILLACDGLFKVFTPEEAVNFILSCLEDDKIQTREGKPAVDARYEAACNRLANKAVQRGSADNVTVMVVRIGH.

Met1 is subject to N-acetylmethionine. Residues 1–91 are disordered; that stretch reads MDLFGDLPEP…PEEEKNGGEE (91 aa). Over residues 56–70 the composition is skewed to polar residues; that stretch reads SGNSGSLATSGSQVV. The segment covering 72-91 has biased composition (basic and acidic residues); sequence TEGKGAKRKAPEEEKNGGEE. Positions 108–390 constitute a PPM-type phosphatase domain; sequence KGYVAERKGE…DNVTVMVVRI (283 aa). Residues Asp152 and Gly153 each coordinate Mn(2+). Lys210 is modified (N6-acetyllysine). The Mn(2+) site is built by Asp326 and Asp381.

This sequence belongs to the PP2C family. As to quaternary structure, interacts with ILK. The cofactor is Mg(2+). Mn(2+) serves as cofactor.

The protein localises to the cytoplasm. The enzyme catalyses O-phospho-L-seryl-[protein] + H2O = L-seryl-[protein] + phosphate. It catalyses the reaction O-phospho-L-threonyl-[protein] + H2O = L-threonyl-[protein] + phosphate. Protein phosphatase that may play a role in regulation of cell cycle progression via dephosphorylation of its substrates whose appropriate phosphorylation states might be crucial for cell proliferation. Selectively associates with integrin linked kinase (ILK), to modulate cell adhesion and growth factor signaling. Inhibits the ILK-GSK3B signaling axis and may play an important role in inhibiting oncogenic transformation. The chain is Integrin-linked kinase-associated serine/threonine phosphatase 2C (Ilkap) from Mus musculus (Mouse).